Reading from the N-terminus, the 154-residue chain is Protein X (154 aa).

The tract at residues 68 to 117 is mitochondrial targeting sequence; the sequence is PCALRFTSARCMETTVNAPRNLPTVLHKRTLGLSAMSTTKIETYFKDCVF.

The protein belongs to the orthohepadnavirus protein X family. As to quaternary structure, may form homodimer. May interact with host CEBPA, CFLAR, CREB1, DDB1, E4F1, HBXIP, HSPD1/HSP60, NFKBIA, POLR2E and SMAD4. Interacts with host SMC5-SMC6 complex and induces its degradation. Interacts with host TRPC4AP; leading to prevent ubiquitination of TRPC4AP. Interacts with host PLSCR1; this interaction promotes ubiquitination and degradation of HBx and impairs HBx-mediated cell proliferation. A fraction may be phosphorylated in insect cells and HepG2 cells, a human hepatoblastoma cell line. Phosphorylated in vitro by host protein kinase C or mitogen-activated protein kinase. N-acetylated in insect cells.

The protein resides in the host cytoplasm. Its subcellular location is the host nucleus. It localises to the host mitochondrion. Multifunctional protein that plays a role in silencing host antiviral defenses and promoting viral transcription. Does not seem to be essential for HBV infection. May be directly involved in development of cirrhosis and liver cancer (hepatocellular carcinoma). Most of cytosolic activities involve modulation of cytosolic calcium. The effect on apoptosis is controversial depending on the cell types in which the studies have been conducted. May induce apoptosis by localizing in mitochondria and causing loss of mitochondrial membrane potential. May also modulate apoptosis by binding host CFLAR, a key regulator of the death-inducing signaling complex (DISC). Promotes viral transcription by using the host E3 ubiquitin ligase DDB1 to target the SMC5-SMC6 complex to proteasomal degradation. This host complex would otherwise bind to viral episomal DNA, and prevents its transcription. Moderately stimulates transcription of many different viral and cellular transcription elements. Promoters and enhancers stimulated by HBx contain DNA binding sites for NF-kappa-B, AP-1, AP-2, c-EBP, ATF/CREB, or the calcium-activated factor NF-AT. This is Protein X from Gorilla gorilla (western gorilla).